A 263-amino-acid chain; its full sequence is 3'-5' ssDNA/RNA exonuclease TatD (263 aa).

Residues Glu91, His127, and His152 each contribute to the a divalent metal cation site.

The protein belongs to the metallo-dependent hydrolases superfamily. TatD-type hydrolase family. TatD subfamily. In terms of assembly, monomer. It depends on Mg(2+) as a cofactor.

It localises to the cytoplasm. 3'-5' exonuclease that prefers single-stranded DNA and RNA. May play a role in the H(2)O(2)-induced DNA damage repair. The polypeptide is 3'-5' ssDNA/RNA exonuclease TatD (Cronobacter sakazakii (strain ATCC BAA-894) (Enterobacter sakazakii)).